We begin with the raw amino-acid sequence, 290 residues long: uncharacterized protein (290 aa).

Positions 67–210 are disordered; it reads LPAAPEAPGD…QPSPKNPTKS (144 aa). Basic and acidic residues predominate over residues 121 to 130; the sequence is RPQETQEGHR. Over residues 181 to 190 the composition is skewed to low complexity; it reads AAQAAAAATA. Polar residues predominate over residues 191–200; that stretch reads NPGSQTQTPL.

This is an uncharacterized protein from Homo sapiens (Human).